The sequence spans 338 residues: Inositol 2-dehydrogenase 4 (338 aa).

This sequence belongs to the Gfo/Idh/MocA family. In terms of assembly, homotetramer.

It carries out the reaction myo-inositol + NAD(+) = scyllo-inosose + NADH + H(+). Its function is as follows. Involved in the oxidation of myo-inositol (MI) to 2-keto-myo-inositol (2KMI or 2-inosose). The protein is Inositol 2-dehydrogenase 4 of Saccharopolyspora erythraea (strain ATCC 11635 / DSM 40517 / JCM 4748 / NBRC 13426 / NCIMB 8594 / NRRL 2338).